A 150-amino-acid chain; its full sequence is Large ribosomal subunit protein bL9 (150 aa).

The protein belongs to the bacterial ribosomal protein bL9 family.

In terms of biological role, binds to the 23S rRNA. The protein is Large ribosomal subunit protein bL9 of Shewanella halifaxensis (strain HAW-EB4).